We begin with the raw amino-acid sequence, 525 residues long: Hydroxyneurosporene desaturase (525 aa).

Belongs to the carotenoid/retinoid oxidoreductase family.

It catalyses the reaction rhodopin + A = (3E)-3,4-didehydrorhodopin + AH2. Its pathway is carotenoid biosynthesis; spheroidene biosynthesis. Its function is as follows. Catalyzes the introduction of C-3,4 double bonds into 1-hydroxyneurosporene (1-HO-Neu) to yield demethylspheroidene (DMS). The preferred substrates are 1-hydroxy-neurosporene, 1-hydroxy-lycopene and 1,1-dihydroxyneurosporene, however the 3,4-didehydrolycopene derivatives such as 1,1-dihydroxy-3,4-didehydrolycopene, 1-methoxy-1-hydroxy-3,4-didehydrolycopene and 1-hydroxy-3,4-didehydrolycopene are also efficiently converted. 1-HO-carotene derivatives can be also used. This Rubrivivax gelatinosus (Rhodocyclus gelatinosus) protein is Hydroxyneurosporene desaturase (crtD).